The following is a 216-amino-acid chain: Adenylate kinase (216 aa).

An ATP-binding site is contributed by 13 to 18 (GAGKGT). Positions 33 to 66 (TTGDALRANKTKDITHLDVEYDTPGAYMDAGELV) are NMP. Residues T34, R39, 64 to 66 (ELV), 89 to 92 (GYPR), and Q96 each bind AMP. The LID stretch occupies residues 125–162 (GRRVCEDCGATFHVSFNQPETEGVCDACGGSLYQREDD). R126 lines the ATP pocket. Zn(2+) is bound by residues C129 and C132. An ATP-binding site is contributed by 135-136 (TF). Residues C149 and C152 each contribute to the Zn(2+) site. Residues R159 and R170 each coordinate AMP. R198 serves as a coordination point for ATP.

This sequence belongs to the adenylate kinase family. Monomer.

It localises to the cytoplasm. It catalyses the reaction AMP + ATP = 2 ADP. Its pathway is purine metabolism; AMP biosynthesis via salvage pathway; AMP from ADP: step 1/1. In terms of biological role, catalyzes the reversible transfer of the terminal phosphate group between ATP and AMP. Plays an important role in cellular energy homeostasis and in adenine nucleotide metabolism. The polypeptide is Adenylate kinase (Halobacterium salinarum (strain ATCC 700922 / JCM 11081 / NRC-1) (Halobacterium halobium)).